The sequence spans 165 residues: uncharacterized protein (165 aa).

Residues 16 to 36 (ASISSILNFFFFYIMEYFVAV) traverse the membrane as a helical segment.

The protein belongs to the asfivirus F165R family.

The protein localises to the host membrane. This is an uncharacterized protein from Ornithodoros (relapsing fever ticks).